The primary structure comprises 431 residues: Serine hydroxymethyltransferase (431 aa).

(6S)-5,6,7,8-tetrahydrofolate contacts are provided by residues Leu128 and 132-134; that span reads GHL. Lys237 carries the post-translational modification N6-(pyridoxal phosphate)lysine.

The protein belongs to the SHMT family. In terms of assembly, homodimer. Pyridoxal 5'-phosphate serves as cofactor.

The protein resides in the cytoplasm. It carries out the reaction (6R)-5,10-methylene-5,6,7,8-tetrahydrofolate + glycine + H2O = (6S)-5,6,7,8-tetrahydrofolate + L-serine. It participates in one-carbon metabolism; tetrahydrofolate interconversion. It functions in the pathway amino-acid biosynthesis; glycine biosynthesis; glycine from L-serine: step 1/1. In terms of biological role, catalyzes the reversible interconversion of serine and glycine with tetrahydrofolate (THF) serving as the one-carbon carrier. This reaction serves as the major source of one-carbon groups required for the biosynthesis of purines, thymidylate, methionine, and other important biomolecules. Also exhibits THF-independent aldolase activity toward beta-hydroxyamino acids, producing glycine and aldehydes, via a retro-aldol mechanism. In Ruegeria sp. (strain TM1040) (Silicibacter sp.), this protein is Serine hydroxymethyltransferase.